Reading from the N-terminus, the 149-residue chain is Putative pre-16S rRNA nuclease (149 aa).

This sequence belongs to the YqgF nuclease family.

The protein resides in the cytoplasm. Could be a nuclease involved in processing of the 5'-end of pre-16S rRNA. The protein is Putative pre-16S rRNA nuclease of Pseudoalteromonas translucida (strain TAC 125).